A 251-amino-acid chain; its full sequence is ATP synthase subunit a (251 aa).

A run of 5 helical transmembrane segments spans residues 34–54 (VFLT…AASS), 93–113 (FVGT…LVPF), 130–150 (INTT…AGFS), 195–215 (LVVG…VMAL), and 216–236 (GLFT…AYIG).

Belongs to the ATPase A chain family. As to quaternary structure, F-type ATPases have 2 components, CF(1) - the catalytic core - and CF(0) - the membrane proton channel. CF(1) has five subunits: alpha(3), beta(3), gamma(1), delta(1), epsilon(1). CF(0) has four main subunits: a, b, b' and c.

The protein localises to the cellular thylakoid membrane. Functionally, key component of the proton channel; it plays a direct role in the translocation of protons across the membrane. The polypeptide is ATP synthase subunit a (Nostoc sp. (strain PCC 7120 / SAG 25.82 / UTEX 2576)).